An 841-amino-acid chain; its full sequence is Protein translocase subunit SecA (841 aa).

Residues Gln-87, 105-109, and Asp-494 contribute to the ATP site; that span reads GEGKT. Positions 825, 827, 836, and 837 each coordinate Zn(2+).

Belongs to the SecA family. As to quaternary structure, monomer and homodimer. Part of the essential Sec protein translocation apparatus which comprises SecA, SecYEG and auxiliary proteins SecDF-YajC and YidC. Zn(2+) is required as a cofactor.

It localises to the cell inner membrane. The protein localises to the cytoplasm. It catalyses the reaction ATP + H2O + cellular proteinSide 1 = ADP + phosphate + cellular proteinSide 2.. Part of the Sec protein translocase complex. Interacts with the SecYEG preprotein conducting channel. Has a central role in coupling the hydrolysis of ATP to the transfer of proteins into and across the cell membrane, serving as an ATP-driven molecular motor driving the stepwise translocation of polypeptide chains across the membrane. The polypeptide is Protein translocase subunit SecA (Syntrophus aciditrophicus (strain SB)).